The sequence spans 417 residues: UDP-N-acetylglucosamine 1-carboxyvinyltransferase (417 aa).

23–24 (KN) serves as a coordination point for phosphoenolpyruvate. Arg-93 serves as a coordination point for UDP-N-acetyl-alpha-D-glucosamine. Asp-117 serves as the catalytic Proton donor. Residues Asp-305 and Val-327 each coordinate UDP-N-acetyl-alpha-D-glucosamine.

This sequence belongs to the EPSP synthase family. MurA subfamily.

The protein localises to the cytoplasm. It catalyses the reaction phosphoenolpyruvate + UDP-N-acetyl-alpha-D-glucosamine = UDP-N-acetyl-3-O-(1-carboxyvinyl)-alpha-D-glucosamine + phosphate. Its pathway is cell wall biogenesis; peptidoglycan biosynthesis. Its function is as follows. Cell wall formation. Adds enolpyruvyl to UDP-N-acetylglucosamine. This is UDP-N-acetylglucosamine 1-carboxyvinyltransferase from Mycolicibacterium paratuberculosis (strain ATCC BAA-968 / K-10) (Mycobacterium paratuberculosis).